Reading from the N-terminus, the 430-residue chain is Delta-aminolevulinic acid dehydratase 1, chloroplastic (430 aa).

The N-terminal 52 residues, 1-52, are a transit peptide targeting the chloroplast; that stretch reads MATTPIFNASCSFPSTRGIDCKSYIGLRSNVSKVSVASSRIATSQRRNLVVR. Pro residues predominate over residues 82–91; the sequence is EAPPVPPKPA. The segment at 82 to 101 is disordered; it reads EAPPVPPKPAAPVGTPIIKP. Catalysis depends on Lys298, which acts as the Schiff-base intermediate with substrate. 5-aminolevulinate contacts are provided by Arg308 and Lys320. Glu336 lines the Mg(2+) pocket. The active-site Schiff-base intermediate with substrate is Lys351. Positions 377 and 416 each coordinate 5-aminolevulinate.

The protein belongs to the ALAD family. In terms of assembly, homooctamer. Mg(2+) is required as a cofactor. In terms of tissue distribution, highly expressed in cotyledons during dark-to-light transition.

The protein resides in the plastid. Its subcellular location is the chloroplast. It catalyses the reaction 2 5-aminolevulinate = porphobilinogen + 2 H2O + H(+). Its pathway is porphyrin-containing compound metabolism; protoporphyrin-IX biosynthesis; coproporphyrinogen-III from 5-aminolevulinate: step 1/4. The protein operates within porphyrin-containing compound metabolism; chlorophyll biosynthesis. Its function is as follows. Catalyzes an early step in the biosynthesis of tetrapyrroles. Binds two molecules of 5-aminolevulinate per subunit, each at a distinct site, and catalyzes their condensation to form porphobilinogen. This Arabidopsis thaliana (Mouse-ear cress) protein is Delta-aminolevulinic acid dehydratase 1, chloroplastic (HEMB1).